The chain runs to 310 residues: Thiamine-monophosphate kinase (310 aa).

Residues Asp-26, Thr-40, Ser-41, and Asp-42 each contribute to the Mg(2+) site. Asp-49 provides a ligand contact to substrate. Residues Asp-70 and Asp-118 each coordinate Mg(2+). ATP is bound by residues 117-118 and Arg-141; that span reads GD. Asp-202 contacts Mg(2+). Ser-204 contacts ATP. Asp-205 contributes to the Mg(2+) binding site. Residues Glu-251 and Trp-299 each contribute to the substrate site.

It belongs to the thiamine-monophosphate kinase family.

The enzyme catalyses thiamine phosphate + ATP = thiamine diphosphate + ADP. Its pathway is cofactor biosynthesis; thiamine diphosphate biosynthesis; thiamine diphosphate from thiamine phosphate: step 1/1. In terms of biological role, catalyzes the ATP-dependent phosphorylation of thiamine-monophosphate (TMP) to form thiamine-pyrophosphate (TPP), the active form of vitamin B1. This is Thiamine-monophosphate kinase from Pyrococcus abyssi (strain GE5 / Orsay).